The primary structure comprises 325 residues: RNA ligase 1 (325 aa).

It depends on Mg(2+) as a cofactor. Mn(2+) is required as a cofactor. In terms of processing, AMPylates itself (auto-AMPylation).

The catalysed reaction is ATP + (ribonucleotide)n-3'-hydroxyl + 5'-phospho-(ribonucleotide)m = (ribonucleotide)n+m + AMP + diphosphate.. Functions as an RNA ligase, in vitro. The ligation reaction entails three nucleotidyl transfer steps. In the first step, the RNA ligase reacts with ATP in the absence of nucleic acid to form a covalent ligase-AMP intermediate and release pyrophosphate. In step 2, the ligase-AMP binds to the nucleic acid and transfers the adenylate to the 5'-PO4 terminus to form an adenylylated intermediate. In step 3, the RNA ligase directs the attack of the 3'-OH on the 5'-phosphoanhydride linkage, resulting in a repaired 3'-5' phosphodiester and release of AMP. Exhibits selectivity for single-stranded RNA substrates and may not have nick-sealing activity on double-stranded DNA-RNA hybrids. May play a role in maintaining RNA integrity under stress conditions, for example in response to reactive oxygen species (ROS). The polypeptide is RNA ligase 1 (Danio rerio (Zebrafish)).